The chain runs to 276 residues: ATP synthase subunit a (276 aa).

6 helical membrane-spanning segments follow: residues 27–47 (ITML…LEVG), 61–81 (GQTF…SLAA), 120–140 (LPFI…GALL), 159–179 (DINT…YAGL), 225–245 (LVVA…LMAL), and 246–266 (GLFT…AYIH).

It belongs to the ATPase A chain family. As to quaternary structure, F-type ATPases have 2 components, CF(1) - the catalytic core - and CF(0) - the membrane proton channel. CF(1) has five subunits: alpha(3), beta(3), gamma(1), delta(1), epsilon(1). CF(0) has four main subunits: a, b, b' and c.

The protein resides in the cellular thylakoid membrane. Key component of the proton channel; it plays a direct role in the translocation of protons across the membrane. In Synechocystis sp. (strain ATCC 27184 / PCC 6803 / Kazusa), this protein is ATP synthase subunit a.